Reading from the N-terminus, the 33-residue chain is Photosystem II reaction center protein Psb30 (33 aa).

Residues 5–25 (LIVQLGSLTLITLAGPLVVVL) traverse the membrane as a helical segment.

Belongs to the Psb30/Ycf12 family. In terms of assembly, PSII is composed of 1 copy each of membrane proteins PsbA, PsbB, PsbC, PsbD, PsbE, PsbF, PsbH, PsbI, PsbJ, PsbK, PsbL, PsbM, PsbT, PsbY, PsbZ, Psb30/Ycf12, peripheral proteins of the oxygen-evolving complex and a large number of cofactors. It forms dimeric complexes.

The protein localises to the plastid. It is found in the chloroplast thylakoid membrane. In terms of biological role, a core subunit of photosystem II (PSII), probably helps stabilize the reaction center. This chain is Photosystem II reaction center protein Psb30, found in Euglena deses.